A 368-amino-acid chain; its full sequence is Zinc finger protein 24 (368 aa).

A Glycyl lysine isopeptide (Lys-Gly) (interchain with G-Cter in SUMO2) cross-link involves residue Lys-22. A Glycyl lysine isopeptide (Lys-Gly) (interchain with G-Cter in SUMO1); alternate cross-link involves residue Lys-27. Lys-27 is covalently cross-linked (Glycyl lysine isopeptide (Lys-Gly) (interchain with G-Cter in SUMO2); alternate). Positions 52 to 134 constitute an SCAN box domain; it reads RQRFRQFGYQ…TVLEDLESEL (83 aa). Phosphoserine occurs at positions 132 and 142. Residues Lys-147, Lys-177, and Lys-236 each participate in a glycyl lysine isopeptide (Lys-Gly) (interchain with G-Cter in SUMO2) cross-link. The C2H2-type 1 zinc-finger motif lies at 251-273; the sequence is HICDECGKHFSQGSALILHQRIH. A necessary and sufficient for nuclear localization region spans residues 251–301; sequence HICDECGKHFSQGSALILHQRIHSGEKPYGCVECGKAFSRSSILVQHQRVH. Position 274 is a phosphoserine (Ser-274). Residues Lys-277 and Lys-286 each participate in a glycyl lysine isopeptide (Lys-Gly) (interchain with G-Cter in SUMO2) cross-link. 3 consecutive C2H2-type zinc fingers follow at residues 279-301, 307-329, and 335-357; these read YGCVECGKAFSRSSILVQHQRVH, YKCLECGKAFSQNSGLINHQRIH, and YECVQCGKSYSQSSNLFRHQRRH. Position 292 is a phosphoserine (Ser-292). Tyr-335 carries the phosphotyrosine modification. Glycyl lysine isopeptide (Lys-Gly) (interchain with G-Cter in SUMO2) cross-links involve residues Lys-361 and Lys-367.

Belongs to the krueppel C2H2-type zinc-finger protein family. Post-translationally, sumoylated.

The protein localises to the nucleus. Transcription factor required for myelination of differentiated oligodendrocytes. Required for the conversion of oligodendrocytes from the premyelinating to the myelinating state. In the developing central nervous system (CNS), involved in the maintenance in the progenitor stage by promoting the cell cycle. Specifically binds to the 5'-TCAT-3' DNA sequence. Has transcription repressor activity in vitro. The protein is Zinc finger protein 24 (ZNF24) of Pongo abelii (Sumatran orangutan).